The sequence spans 146 residues: Cyanate hydratase (146 aa).

Active-site residues include arginine 87, glutamate 90, and serine 113.

This sequence belongs to the cyanase family.

The catalysed reaction is cyanate + hydrogencarbonate + 3 H(+) = NH4(+) + 2 CO2. Its function is as follows. Catalyzes the reaction of cyanate with bicarbonate to produce ammonia and carbon dioxide. The protein is Cyanate hydratase of Teredinibacter turnerae (strain ATCC 39867 / T7901).